The chain runs to 1004 residues: ABC transporter G family member 25 (1004 aa).

The signal sequence occupies residues 1-27; the sequence is MAASQLLAAAVAAAVFLAALLVPPARC. Residues 271 to 291 traverse the membrane as a helical segment; that stretch reads ATALFGGILIVILSVVLLLVY. The disordered stretch occupies residues 343–373; the sequence is SDQLAASSNEARHATEGNGKRSKNRKKLAHA. The segment covering 352 to 361 has biased composition (basic and acidic residues); that stretch reads EARHATEGNG. Residues 362–372 show a composition bias toward basic residues; that stretch reads KRSKNRKKLAH. One can recognise an ABC transporter domain in the interval 419-659; sequence VVFKGLTLSI…FSSLGIKVPE (241 aa). Residue 451–458 coordinates ATP; it reads GPSGAGKT. 6 consecutive transmembrane segments (helical) span residues 776-796, 804-824, 886-906, 907-927, 943-963, and 978-998; these read ATLQ…IGTI, FGVA…QLAA, LVFL…AIWF, ELGL…LVGT, WALE…WLIT, and FVLC…IALL.

It belongs to the ABC transporter superfamily. ABCG family. Eye pigment precursor importer (TC 3.A.1.204) subfamily.

It localises to the membrane. This chain is ABC transporter G family member 25, found in Oryza sativa subsp. japonica (Rice).